We begin with the raw amino-acid sequence, 359 residues long: Lipopolysaccharide 1,6-galactosyltransferase (359 aa).

2 residues coordinate UDP: Q244 and E276.

Belongs to the glycosyltransferase group 1 family. Glycosyltransferase 4 subfamily.

The enzyme catalyses alpha-D-Glc-(1-&gt;3)-[L-alpha-D-Hep-(1-&gt;7)]-4-O-PO3(2-)-L-alpha-D-Hep-(1-&gt;3)-4-O-PO3(2-)-L-alpha-D-Hep-(1-&gt;5)-[alpha-Kdo-(2-&gt;4)]-alpha-Kdo-(2-&gt;6)-lipid A + UDP-alpha-D-galactose = alpha-D-Gal-(1-&gt;6)-alpha-D-Glc-(1-&gt;3)-[L-alpha-D-Hep-(1-&gt;7)]-4-O-PO3(2-)-L-alpha-D-Hep-(1-&gt;3)-4-O-PO3(2-)-L-alpha-D-Hep-(1-&gt;5)-[alpha-Kdo-(2-&gt;4)]-alpha-Kdo-(2-&gt;6)-lipid A + UDP + H(+). It participates in bacterial outer membrane biogenesis; LPS core biosynthesis. Functionally, galactosyltransferase involved in the biosynthesis of the core oligosaccharide region of lipopolysaccharide (LPS). Catalyzes the addition of galactose from UDP-galactose to the first glucose residue of the LPS outer core. In Salmonella typhimurium (strain LT2 / SGSC1412 / ATCC 700720), this protein is Lipopolysaccharide 1,6-galactosyltransferase.